Consider the following 954-residue polypeptide: Glycine dehydrogenase (decarboxylating) (954 aa).

K704 bears the N6-(pyridoxal phosphate)lysine mark.

This sequence belongs to the GcvP family. The glycine cleavage system is composed of four proteins: P, T, L and H. Requires pyridoxal 5'-phosphate as cofactor.

The enzyme catalyses N(6)-[(R)-lipoyl]-L-lysyl-[glycine-cleavage complex H protein] + glycine + H(+) = N(6)-[(R)-S(8)-aminomethyldihydrolipoyl]-L-lysyl-[glycine-cleavage complex H protein] + CO2. Its function is as follows. The glycine cleavage system catalyzes the degradation of glycine. The P protein binds the alpha-amino group of glycine through its pyridoxal phosphate cofactor; CO(2) is released and the remaining methylamine moiety is then transferred to the lipoamide cofactor of the H protein. The chain is Glycine dehydrogenase (decarboxylating) from Rhizobium meliloti (strain 1021) (Ensifer meliloti).